The following is a 250-amino-acid chain: 5'-nucleotidase SurE (250 aa).

A divalent metal cation-binding residues include aspartate 8, aspartate 9, serine 39, and asparagine 92.

The protein belongs to the SurE nucleotidase family. A divalent metal cation serves as cofactor.

Its subcellular location is the cytoplasm. The catalysed reaction is a ribonucleoside 5'-phosphate + H2O = a ribonucleoside + phosphate. Its function is as follows. Nucleotidase that shows phosphatase activity on nucleoside 5'-monophosphates. This Vibrio cholerae serotype O1 (strain ATCC 39315 / El Tor Inaba N16961) protein is 5'-nucleotidase SurE.